A 488-amino-acid polypeptide reads, in one-letter code: Protein nucleotidyltransferase YdiU (488 aa).

ATP-binding residues include glycine 91, glycine 93, arginine 94, lysine 114, aspartate 126, glycine 127, arginine 177, and arginine 184. The segment at 108 to 127 (RFDIQLKGSGPTPYSRRGDG) is disordered. Aspartate 253 functions as the Proton acceptor in the catalytic mechanism. Residues asparagine 254 and aspartate 263 each coordinate Mg(2+). Aspartate 263 serves as a coordination point for ATP.

This sequence belongs to the SELO family. Requires Mg(2+) as cofactor. Mn(2+) serves as cofactor.

The enzyme catalyses L-seryl-[protein] + ATP = 3-O-(5'-adenylyl)-L-seryl-[protein] + diphosphate. It carries out the reaction L-threonyl-[protein] + ATP = 3-O-(5'-adenylyl)-L-threonyl-[protein] + diphosphate. It catalyses the reaction L-tyrosyl-[protein] + ATP = O-(5'-adenylyl)-L-tyrosyl-[protein] + diphosphate. The catalysed reaction is L-histidyl-[protein] + UTP = N(tele)-(5'-uridylyl)-L-histidyl-[protein] + diphosphate. The enzyme catalyses L-seryl-[protein] + UTP = O-(5'-uridylyl)-L-seryl-[protein] + diphosphate. It carries out the reaction L-tyrosyl-[protein] + UTP = O-(5'-uridylyl)-L-tyrosyl-[protein] + diphosphate. Its function is as follows. Nucleotidyltransferase involved in the post-translational modification of proteins. It can catalyze the addition of adenosine monophosphate (AMP) or uridine monophosphate (UMP) to a protein, resulting in modifications known as AMPylation and UMPylation. The chain is Protein nucleotidyltransferase YdiU from Bacillus anthracis (strain A0248).